The chain runs to 240 residues: Octanoyltransferase (240 aa).

A BPL/LPL catalytic domain is found at 49-233; that stretch reads HQAEELVWLL…AFESVFGATR (185 aa). Residues 87-94, 162-164, and 175-177 contribute to the substrate site; these read RGGQVTYH, AIG, and GIA. Catalysis depends on cysteine 193, which acts as the Acyl-thioester intermediate.

This sequence belongs to the LipB family.

The protein resides in the cytoplasm. It catalyses the reaction octanoyl-[ACP] + L-lysyl-[protein] = N(6)-octanoyl-L-lysyl-[protein] + holo-[ACP] + H(+). It participates in protein modification; protein lipoylation via endogenous pathway; protein N(6)-(lipoyl)lysine from octanoyl-[acyl-carrier-protein]: step 1/2. In terms of biological role, catalyzes the transfer of endogenously produced octanoic acid from octanoyl-acyl-carrier-protein onto the lipoyl domains of lipoate-dependent enzymes. Lipoyl-ACP can also act as a substrate although octanoyl-ACP is likely to be the physiological substrate. The sequence is that of Octanoyltransferase from Bradyrhizobium sp. (strain ORS 278).